The following is a 484-amino-acid chain: Probable peptide/nitrate transporter At3g43790 (484 aa).

12 helical membrane-spanning segments follow: residues 39–59, 76–96, 107–127, 129–149, 168–188, 210–230, 278–298, 318–338, 355–375, 381–401, 416–436, and 460–480; these read FIWLVSLCTALPISSLFPYIY, FYAGFVGSSFMIGRALTSIFW, PIILIGTFSVIIFNTLFGLST, FWLAISVRFLLGCFNCLLGVI, VVSTSRGIGLILGPAIGGYLA, FLPSLVISVYATAVLIACWWL, MAIIIVYCVFSLQEIAYNEIF, VGEVLAISGLGLLVFQLLVYP, VLLIPLLSCYPYIALLSGVTL, CASIIKNALSISLVTGLFIML, ISMTAMSVFKSFGPAGGGVLF, and VFLVLNLVQLVGLILTFIPYI.

It belongs to the major facilitator superfamily.

Its subcellular location is the membrane. This chain is Probable peptide/nitrate transporter At3g43790 (ZIFL2), found in Arabidopsis thaliana (Mouse-ear cress).